Here is a 450-residue protein sequence, read N- to C-terminus: Serine--tRNA ligase, cytoplasmic (450 aa).

An L-serine-binding site is contributed by Thr238–Glu240. ATP-binding positions include Arg271 to Glu273 and Val287. Glu294 provides a ligand contact to L-serine. Glu358–Ser361 provides a ligand contact to ATP. Thr396 provides a ligand contact to L-serine.

Belongs to the class-II aminoacyl-tRNA synthetase family. Type-1 seryl-tRNA synthetase subfamily. As to quaternary structure, homodimer. The tRNA molecule binds across the dimer.

It localises to the cytoplasm. The protein localises to the cytosol. The catalysed reaction is tRNA(Ser) + L-serine + ATP = L-seryl-tRNA(Ser) + AMP + diphosphate + H(+). Its function is as follows. Catalyzes the attachment of serine to tRNA(Ser) in a two-step reaction: serine is first activated by ATP to form Ser-AMP and then transferred to the acceptor end of tRNA(Ser). This Schizosaccharomyces pombe (strain 972 / ATCC 24843) (Fission yeast) protein is Serine--tRNA ligase, cytoplasmic.